The sequence spans 385 residues: UPF0744 protein YSD83 (385 aa).

The protein belongs to the UPF0744 family.

The polypeptide is UPF0744 protein YSD83 (YSD83) (Saccharomyces paradoxus (Yeast)).